Consider the following 508-residue polypeptide: Catalase (508 aa).

A signal peptide spans 1-21 (MHMSKSFLLISMGLASISVHA). Catalysis depends on residues H72 and N145. Residue Y353 participates in heme binding. Over residues 373–392 (PKSPVANHNQDGPSNNSTGL) the composition is skewed to polar residues. The interval 373–396 (PKSPVANHNQDGPSNNSTGLGNVD) is disordered.

This sequence belongs to the catalase family. Heme serves as cofactor.

Its subcellular location is the periplasm. The enzyme catalyses 2 H2O2 = O2 + 2 H2O. Functionally, decomposes hydrogen peroxide into water and oxygen; serves to protect cells from the toxic effects of hydrogen peroxide. The sequence is that of Catalase from Vibrio vulnificus (strain YJ016).